We begin with the raw amino-acid sequence, 68 residues long: Antimicrobial peptide Eval418 (68 aa).

A signal peptide spans Met1–Ala23. Ile36 is modified (isoleucine amide). The propeptide occupies Gly37–Arg68.

The protein belongs to the non-disulfide-bridged peptide (NDBP) superfamily. Short antimicrobial peptide (group 4) family. Expressed by the venom gland.

The protein localises to the secreted. Its function is as follows. Probable antimicrobial peptide. Shows dose-dependent and time-dependent inactivation of herpes simplex virus type 1 (HSV-1) and dose-dependent inhibition of HSV-1 viral attachment to host cells. Scarcely suppress an established HSV-1 infection due to poor cellular uptake. This Euscorpiops validus (Scorpion) protein is Antimicrobial peptide Eval418.